The following is a 132-amino-acid chain: Large ribosomal subunit protein bL17 (132 aa).

Belongs to the bacterial ribosomal protein bL17 family. Part of the 50S ribosomal subunit. Contacts protein L32.

This Ruthia magnifica subsp. Calyptogena magnifica protein is Large ribosomal subunit protein bL17.